The sequence spans 165 residues: ATP synthase subunit b (165 aa).

The chain crosses the membrane as a helical span at residues S7–I27.

The protein belongs to the ATPase B chain family. As to quaternary structure, F-type ATPases have 2 components, F(1) - the catalytic core - and F(0) - the membrane proton channel. F(1) has five subunits: alpha(3), beta(3), gamma(1), delta(1), epsilon(1). F(0) has three main subunits: a(1), b(2) and c(10-14). The alpha and beta chains form an alternating ring which encloses part of the gamma chain. F(1) is attached to F(0) by a central stalk formed by the gamma and epsilon chains, while a peripheral stalk is formed by the delta and b chains.

The protein resides in the cell membrane. F(1)F(0) ATP synthase produces ATP from ADP in the presence of a proton or sodium gradient. F-type ATPases consist of two structural domains, F(1) containing the extramembraneous catalytic core and F(0) containing the membrane proton channel, linked together by a central stalk and a peripheral stalk. During catalysis, ATP synthesis in the catalytic domain of F(1) is coupled via a rotary mechanism of the central stalk subunits to proton translocation. Its function is as follows. Component of the F(0) channel, it forms part of the peripheral stalk, linking F(1) to F(0). This is ATP synthase subunit b from Streptococcus agalactiae serotype Ia (strain ATCC 27591 / A909 / CDC SS700).